Here is a 349-residue protein sequence, read N- to C-terminus: Divinyl chlorophyll a/b light-harvesting protein PcbB (349 aa).

6 helical membrane-spanning segments follow: residues 27–47 (FIAA…AATL), 57–77 (LPMG…GIGF), 91–113 (IAIL…SVYF), 201–221 (VMGG…FHIA), 241–261 (AILS…AFWA), and 306–326 (LVNV…WHAL).

Belongs to the PsbB/PsbC family. IsiA/Pcb subfamily. The antenna complex consists of divinyl chlorophylls (a and b) and divinyl chlorophyll a/b binding proteins and binds more divinyl chlorophyll b than does the antenna complex from high-light-adapted Prochlorococcus. The cofactor is divinyl chlorophyll a. It depends on divinyl chlorophyll b as a cofactor.

It is found in the cellular thylakoid membrane. The antenna complex functions as a light receptor, it captures and delivers excitation energy to photosystems II and I. The Prochlorales pcb genes are not related to higher plant LHCs. The sequence is that of Divinyl chlorophyll a/b light-harvesting protein PcbB (pcbB) from Prochlorococcus marinus (strain SARG / CCMP1375 / SS120).